We begin with the raw amino-acid sequence, 380 residues long: Chaperone protein DnaJ (380 aa).

The 65-residue stretch at 5-69 (DYYEILGVSK…QKRAHYDQFG (65 aa)) folds into the J domain. A CR-type zinc finger spans residues 135–217 (GKETDIEIPR…CGGTGRVKRR (83 aa)). Positions 148, 151, 165, 168, 191, 194, 205, and 208 each coordinate Zn(2+). 4 CXXCXGXG motif repeats span residues 148–155 (CNTCHGTG), 165–172 (CSYCHGTG), 191–198 (CPYCGGTG), and 205–212 (CTTCGGTG).

It belongs to the DnaJ family. As to quaternary structure, homodimer. Requires Zn(2+) as cofactor.

Its subcellular location is the cytoplasm. Its function is as follows. Participates actively in the response to hyperosmotic and heat shock by preventing the aggregation of stress-denatured proteins and by disaggregating proteins, also in an autonomous, DnaK-independent fashion. Unfolded proteins bind initially to DnaJ; upon interaction with the DnaJ-bound protein, DnaK hydrolyzes its bound ATP, resulting in the formation of a stable complex. GrpE releases ADP from DnaK; ATP binding to DnaK triggers the release of the substrate protein, thus completing the reaction cycle. Several rounds of ATP-dependent interactions between DnaJ, DnaK and GrpE are required for fully efficient folding. Also involved, together with DnaK and GrpE, in the DNA replication of plasmids through activation of initiation proteins. The polypeptide is Chaperone protein DnaJ (Parageobacillus thermoglucosidasius (Geobacillus thermoglucosidasius)).